Here is an 854-residue protein sequence, read N- to C-terminus: Envelope glycoprotein gp150 (854 aa).

Over 1–783 the chain is Extracellular; the sequence is MAEGFAANRQ…WIGKIPQYLK (783 aa). N220, N258, N269, N274, N298, N330, N336, N342, N418, N422, N448, N469, N481, N499, N518, N531, N548, and N551 each carry an N-linked (GlcNAc...) asparagine; by host glycan. The interval 614 to 634 is fusion peptide; that stretch reads IMLALATVLSIAGAGTGATAI. Positions 641-691 form a coiled coil; the sequence is QQVLATHQEALDKITEALKINNLRLVTLEHQMLVIGLKVEAIEKFLYTAFA. The immunosuppression stretch occupies residues 660-678; sequence INNLRLVTLEHQMLVIGLK. N-linked (GlcNAc...) asparagine; by host glycans are attached at residues N715, N719, N727, and N735. Residues 734 to 770 adopt a coiled-coil conformation; it reads YNQTKYLQQKFYEIIMDIEQNNVQGKQGLQKLQNWQD. A helical membrane pass occupies residues 784–804; that stretch reads GLLGGILGIGLGILLLILCLP. Residues 805–854 are Cytoplasmic-facing; it reads TLVDCIRNCISKVLGYTVIAMPEIDDEEETVQMELRKNGRQCGMSEKEEE.

The mature envelope protein (Env) consists of a trimer of SU-TM heterodimers attached by non-covalent interactions or by a labile interchain disulfide bond. Post-translationally, specific enzymatic cleavages in vivo yield mature proteins. Envelope glycoproteins are synthesized as an inactive precursor that is N-glycosylated and processed likely by host cell furin or by a furin-like protease in the Golgi to yield the mature SU and TM proteins. The cleavage site between SU and TM requires the minimal sequence [KR]-X-[KR]-R.

The protein resides in the virion membrane. The protein localises to the host cell membrane. The surface protein (SU) attaches the virus to the host cell by binding to its receptor. This interaction triggers the refolding of the transmembrane protein (TM) and is thought to activate its fusogenic potential by unmasking its fusion peptide. Fusion occurs at the host cell plasma membrane. Its function is as follows. The transmembrane protein (TM) acts as a class I viral fusion protein. Under the current model, the protein has at least 3 conformational states: pre-fusion native state, pre-hairpin intermediate state, and post-fusion hairpin state. During viral and target cell membrane fusion, the coiled coil regions (heptad repeats) assume a trimer-of-hairpins structure, positioning the fusion peptide in close proximity to the C-terminal region of the ectodomain. The formation of this structure appears to drive apposition and subsequent fusion of viral and target cell membranes. Membranes fusion leads to delivery of the nucleocapsid into the cytoplasm. The protein is Envelope glycoprotein gp150 (env) of Feline immunodeficiency virus (strain San Diego) (FIV).